The following is a 383-amino-acid chain: Acetylornithine deacetylase (383 aa).

Histidine 80 is a binding site for Zn(2+). Aspartate 82 is a catalytic residue. Aspartate 112 serves as a coordination point for Zn(2+). The active site involves glutamate 144. Zn(2+) contacts are provided by glutamate 145, glutamate 169, and histidine 355.

The protein belongs to the peptidase M20A family. ArgE subfamily. In terms of assembly, homodimer. It depends on Zn(2+) as a cofactor. Requires Co(2+) as cofactor. The cofactor is glutathione.

It is found in the cytoplasm. The enzyme catalyses N(2)-acetyl-L-ornithine + H2O = L-ornithine + acetate. The protein operates within amino-acid biosynthesis; L-arginine biosynthesis; L-ornithine from N(2)-acetyl-L-ornithine (linear): step 1/1. In terms of biological role, catalyzes the hydrolysis of the amide bond of N(2)-acetylated L-amino acids. Cleaves the acetyl group from N-acetyl-L-ornithine to form L-ornithine, an intermediate in L-arginine biosynthesis pathway, and a branchpoint in the synthesis of polyamines. This is Acetylornithine deacetylase from Escherichia coli O127:H6 (strain E2348/69 / EPEC).